The primary structure comprises 290 residues: Pyridoxal kinase PdxY (290 aa).

Substrate contacts are provided by residues S12 and 47 to 48; that span reads TQ. ATP is bound by residues D114, E151, K184, and 211-214; that span reads RPLL. D225 contributes to the substrate binding site.

The protein belongs to the pyridoxine kinase family. PdxY subfamily. In terms of assembly, homodimer. Requires Mg(2+) as cofactor.

The enzyme catalyses pyridoxal + ATP = pyridoxal 5'-phosphate + ADP + H(+). The protein operates within cofactor metabolism; pyridoxal 5'-phosphate salvage; pyridoxal 5'-phosphate from pyridoxal: step 1/1. Its function is as follows. Pyridoxal kinase involved in the salvage pathway of pyridoxal 5'-phosphate (PLP). Catalyzes the phosphorylation of pyridoxal to PLP. The protein is Pyridoxal kinase PdxY of Pseudomonas putida (strain GB-1).